The following is a 556-amino-acid chain: Phenylalanine--tRNA ligase beta subunit (556 aa).

The B5 domain maps to 278–354 (LTPKEFEVSF…IAYGYNNIDP (77 aa)). Residues Asp-332, Asp-338, Glu-341, and Asp-342 each contribute to the Mg(2+) site.

It belongs to the phenylalanyl-tRNA synthetase beta subunit family. Type 2 subfamily. As to quaternary structure, tetramer of two alpha and two beta subunits. It depends on Mg(2+) as a cofactor.

The protein localises to the cytoplasm. It carries out the reaction tRNA(Phe) + L-phenylalanine + ATP = L-phenylalanyl-tRNA(Phe) + AMP + diphosphate + H(+). The sequence is that of Phenylalanine--tRNA ligase beta subunit from Pyrococcus furiosus (strain ATCC 43587 / DSM 3638 / JCM 8422 / Vc1).